Here is a 401-residue protein sequence, read N- to C-terminus: Ornithine aminotransferase (401 aa).

The residue at position 258 (K258) is an N6-(pyridoxal phosphate)lysine.

Belongs to the class-III pyridoxal-phosphate-dependent aminotransferase family. OAT subfamily. Requires pyridoxal 5'-phosphate as cofactor.

The protein resides in the cytoplasm. The catalysed reaction is a 2-oxocarboxylate + L-ornithine = L-glutamate 5-semialdehyde + an L-alpha-amino acid. It participates in amino-acid biosynthesis; L-proline biosynthesis; L-glutamate 5-semialdehyde from L-ornithine: step 1/1. Functionally, catalyzes the interconversion of ornithine to glutamate semialdehyde. The polypeptide is Ornithine aminotransferase (Bacillus subtilis (strain 168)).